The sequence spans 319 residues: ATP-dependent 6-phosphofructokinase (319 aa).

G11 provides a ligand contact to ATP. 21-25 (RAVVR) lines the ADP pocket. ATP contacts are provided by residues 72–73 (RC) and 102–105 (GDGS). Mg(2+) is bound at residue D103. 125 to 127 (TID) provides a ligand contact to substrate. The active-site Proton acceptor is the D127. R154 serves as a coordination point for ADP. Substrate-binding positions include R162 and 169 to 171 (MGR). ADP-binding positions include 185–187 (GAE), R211, and 213–215 (KKH). Substrate contacts are provided by residues E222, R243, and 249-252 (HMQR).

The protein belongs to the phosphofructokinase type A (PFKA) family. ATP-dependent PFK group I subfamily. Prokaryotic clade 'B1' sub-subfamily. In terms of assembly, homotetramer. The cofactor is Mg(2+).

It localises to the cytoplasm. The catalysed reaction is beta-D-fructose 6-phosphate + ATP = beta-D-fructose 1,6-bisphosphate + ADP + H(+). Its pathway is carbohydrate degradation; glycolysis; D-glyceraldehyde 3-phosphate and glycerone phosphate from D-glucose: step 3/4. Allosterically activated by ADP and other diphosphonucleosides, and allosterically inhibited by phosphoenolpyruvate. In terms of biological role, catalyzes the phosphorylation of D-fructose 6-phosphate to fructose 1,6-bisphosphate by ATP, the first committing step of glycolysis. This chain is ATP-dependent 6-phosphofructokinase, found in Macrococcus caseolyticus (strain JCSC5402) (Macrococcoides caseolyticum).